Consider the following 482-residue polypeptide: UDP-N-acetylmuramate--L-alanine ligase (482 aa).

The disordered stretch occupies residues 1-26 (MPQLPMTDSAPLPTPAPSSPAQPSAQ). Residue 140–146 (GTHGKTT) coordinates ATP.

This sequence belongs to the MurCDEF family.

The protein localises to the cytoplasm. It catalyses the reaction UDP-N-acetyl-alpha-D-muramate + L-alanine + ATP = UDP-N-acetyl-alpha-D-muramoyl-L-alanine + ADP + phosphate + H(+). Its pathway is cell wall biogenesis; peptidoglycan biosynthesis. Cell wall formation. The sequence is that of UDP-N-acetylmuramate--L-alanine ligase from Deinococcus radiodurans (strain ATCC 13939 / DSM 20539 / JCM 16871 / CCUG 27074 / LMG 4051 / NBRC 15346 / NCIMB 9279 / VKM B-1422 / R1).